The following is a 414-amino-acid chain: 2,3-diketo-5-methylthiopentyl-1-phosphate enolase (414 aa).

Residue Lys-99 is the Proton acceptor of the active site. Residues Lys-148, 174-177, His-265, Gly-338, and 360-361 each bind substrate; these read KDDE and GG. Mg(2+) contacts are provided by Lys-174, Asp-176, and Glu-177. Residue Lys-174 is modified to N6-carboxylysine.

This sequence belongs to the RuBisCO large chain family. Type IV subfamily. In terms of assembly, homodimer. Mg(2+) is required as a cofactor.

The enzyme catalyses 5-methylsulfanyl-2,3-dioxopentyl phosphate = 2-hydroxy-5-methylsulfanyl-3-oxopent-1-enyl phosphate. Its pathway is amino-acid biosynthesis; L-methionine biosynthesis via salvage pathway; L-methionine from S-methyl-5-thio-alpha-D-ribose 1-phosphate: step 3/6. In terms of biological role, catalyzes the enolization of 2,3-diketo-5-methylthiopentyl-1-phosphate (DK-MTP-1-P) into 2-hydroxy-3-keto-5-methylthiopentenyl-1-phosphate (HK-MTPenyl-1-P). This chain is 2,3-diketo-5-methylthiopentyl-1-phosphate enolase, found in Bacillus cereus (strain B4264).